The chain runs to 87 residues: Defensin-like protein 218 (87 aa).

The signal sequence occupies residues 1 to 19 (MKTIVCFLTILILVSSCES). Disulfide bonds link Cys51/Cys70, Cys54/Cys75, and Cys58/Cys77.

The protein belongs to the DEFL family.

Its subcellular location is the secreted. This is Defensin-like protein 218 from Arabidopsis thaliana (Mouse-ear cress).